The following is a 202-amino-acid chain: Small ribosomal subunit protein uS5 (202 aa).

An S5 DRBM domain is found at 50–113 (LKQEILNINV…REAKLNLTPV (64 aa)).

Belongs to the universal ribosomal protein uS5 family. As to quaternary structure, part of the 30S ribosomal subunit. Contacts protein S4.

Functionally, with S4 and S12 plays an important role in translational accuracy. The chain is Small ribosomal subunit protein uS5 from Pyrobaculum islandicum (strain DSM 4184 / JCM 9189 / GEO3).